The primary structure comprises 137 residues: uncharacterized protein (137 aa).

The segment covering 1-10 has biased composition (low complexity); the sequence is MISVDVPGHP. The interval 1–23 is disordered; that stretch reads MISVDVPGHPGDAGGGGGGARKV. Positions 11-20 are enriched in gly residues; it reads GDAGGGGGGA.

This is an uncharacterized protein from Human adenovirus C serotype 2 (HAdV-2).